The following is a 715-amino-acid chain: Fatty acid oxidation complex subunit alpha (715 aa).

The enoyl-CoA hydratase stretch occupies residues 1-190 (MTTTSAFMLN…KAGLVDDVVP (190 aa)). The 3-hydroxyacyl-CoA dehydrogenase stretch occupies residues 306 to 714 (GPLNSVGILG…FWTNGETDQG (409 aa)).

In the N-terminal section; belongs to the enoyl-CoA hydratase/isomerase family. This sequence in the central section; belongs to the 3-hydroxyacyl-CoA dehydrogenase family. In terms of assembly, heterotetramer of two alpha chains (FadJ) and two beta chains (FadI).

It is found in the cytoplasm. The enzyme catalyses a (3S)-3-hydroxyacyl-CoA = a (2E)-enoyl-CoA + H2O. It carries out the reaction a 4-saturated-(3S)-3-hydroxyacyl-CoA = a (3E)-enoyl-CoA + H2O. It catalyses the reaction a (3S)-3-hydroxyacyl-CoA + NAD(+) = a 3-oxoacyl-CoA + NADH + H(+). The catalysed reaction is (3S)-3-hydroxybutanoyl-CoA = (3R)-3-hydroxybutanoyl-CoA. It functions in the pathway lipid metabolism; fatty acid beta-oxidation. Functionally, catalyzes the formation of a hydroxyacyl-CoA by addition of water on enoyl-CoA. Also exhibits 3-hydroxyacyl-CoA epimerase and 3-hydroxyacyl-CoA dehydrogenase activities. The chain is Fatty acid oxidation complex subunit alpha from Salmonella paratyphi A (strain ATCC 9150 / SARB42).